An 864-amino-acid chain; its full sequence is Disintegrin and metalloproteinase domain-containing protein 15 (864 aa).

The N-terminal stretch at 1–17 (MRLALLWALGLLGAGSP) is a signal peptide. The interval 17–49 (PRPSPPLPNIGGTEEEQQASPERTQSRSLENQV) is disordered. Positions 18–208 (RPSPPLPNIG…EQHHLRRLKR (191 aa)) are excised as a propeptide. The span at 34–49 (QASPERTQSRSLENQV) shows a compositional bias: polar residues. N-linked (GlcNAc...) asparagine glycosylation is present at Asn57. A Cysteine switch motif is present at residues 178–185 (HTCAPSWH). Cys180 contributes to the Zn(2+) binding site. Over 209–698 (DVVTETKIVE…QLRATSSLTT (490 aa)) the chain is Extracellular. One can recognise a Peptidase M12B domain in the interval 215 to 416 (KIVELVIVAD…GMGSCLFEWP (202 aa)). Residue Asn239 is glycosylated (N-linked (GlcNAc...) asparagine). 4 disulfides stabilise this stretch: Cys325–Cys411, Cys367–Cys395, Cys369–Cys378, and Cys482–Cys502. His350 is a binding site for Zn(2+). Glu351 is a catalytic residue. Zn(2+)-binding residues include His354 and His360. Asn391 and Asn394 each carry an N-linked (GlcNAc...) asparagine glycan. Residues 423–510 (SSLCGNMFVD…QCPPDIRLGD (88 aa)) form the Disintegrin domain. N-linked (GlcNAc...) asparagine glycans are attached at residues Asn608 and Asn613. Disulfide bonds link Cys659/Cys669, Cys663/Cys675, and Cys677/Cys686. The EGF-like domain occupies 659 to 687 (CRSKCHGHGVCDSSRHCHCDEGWAPPDCM). The chain crosses the membrane as a helical span at residues 699–719 (GLLLSLLLLLVLVLLGASYWY). 2 positions are modified to phosphotyrosine; by HCK and LCK: Tyr717 and Tyr737. Topologically, residues 720 to 864 (RARLHQRLCQ…PPPAASSLYL (145 aa)) are cytoplasmic. The disordered stretch occupies residues 738 to 864 (RAAQSGPPER…PPPAASSLYL (127 aa)). Polar residues predominate over residues 753–765 (RAQQMPGTKQANV). 2 stretches are compositionally biased toward pro residues: residues 768 to 780 (PVPPSRPLPPNPV) and 810 to 825 (PQGPTKPPPPRKPLPA). The SH3-binding motif lies at 816-822 (PPPPRKP). Residues 826–850 (NPQGRPPLGDLPGPGDGSLQLVVPS) are compositionally biased toward low complexity. Positions 851 to 857 (RPAPPPP) match the SH3-binding motif.

In terms of assembly, interacts with ITAGV-ITGB3 (vitronectin receptor). Interacts with SH3GL2 and SNX9; this interaction occurs preferentially with ADAM15 precursor, rather than the processed form, suggesting it occurs in a secretory pathway compartment prior to the medial Golgi. Interacts with ITAG9-ITGB1. Interacts specifically with Src family protein-tyrosine kinases (PTKs). Interacts with SH3PXD2A. Interacts with ITAGV-ITGB1. Interacts with GRB2, HCK, ITSN1, ITSN2, LYN, MAPK1, MAPK3, NCF1, NCK1, nephrocystin, PTK6, SNX33, LCK and SRC. Zn(2+) is required as a cofactor. Post-translationally, the precursor is cleaved by a furin endopeptidase. In terms of processing, phosphorylation increases association with PTKs. As to expression, predominantly expressed in brain, spinal cord, sciatic nerve and lung. Expressed at lower levels in all other tissues. In the peripheral nervous system, expressed predominantly by Schwann cells. In the central nervous system, preferentially expressed by neuronal cells.

The protein resides in the endomembrane system. Its subcellular location is the cell junction. The protein localises to the adherens junction. It localises to the cell projection. It is found in the cilium. The protein resides in the flagellum. Its subcellular location is the cytoplasmic vesicle. The protein localises to the secretory vesicle. It localises to the acrosome. Functionally, active metalloproteinase with gelatinolytic and collagenolytic activity. Plays a role in the wound healing process. Mediates both heterotypic intraepithelial cell/T-cell interactions and homotypic T-cell aggregation. Inhibits beta-1 integrin-mediated cell adhesion and migration of airway smooth muscle cells. Suppresses cell motility on or towards fibronectin possibly by driving alpha-v/beta-1 integrin (ITAGV-ITGB1) cell surface expression via ERK1/2 inactivation. Cleaves E-cadherin in response to growth factor deprivation. Plays a role in glomerular cell migration. Plays a role in pathological neovascularization. May play a role in cartilage remodeling. May be proteolytically processed, during sperm epididymal maturation and the acrosome reaction. May play a role in sperm-egg binding through its disintegrin domain. The polypeptide is Disintegrin and metalloproteinase domain-containing protein 15 (Adam15) (Rattus norvegicus (Rat)).